An 873-amino-acid polypeptide reads, in one-letter code: Protein sey1 (873 aa).

At 1 to 762 (MVDQRPRAGS…KRSAIGGITQ (762 aa)) the chain is on the cytoplasmic side. One can recognise a GB1/RHD3-type G domain in the interval 68–320 (GFNYHLISVF…IPADGFAHYA (253 aa)). Residue 78-85 (GSQSTGKS) coordinates GTP. Residues 462–519 (SYDFAEIVKQETKAALERYEKEARASLVEGTSWSNYKQELKLYQKDLAEVSGQLRRDE) adopt a coiled-coil conformation. The disordered stretch occupies residues 691-716 (RWVGHTPSSATAADEEDLTPIGGVDE). Over residues 703-716 (ADEEDLTPIGGVDE) the composition is skewed to acidic residues. The helical transmembrane segment at 763–783 (VPLYFYGLLLALGWNEIWAVL) threads the bilayer. Residues 784-786 (RNP) are Lumenal-facing. Residues 787–807 (AYFFLLFVCAIGAYVTYQLNL) form a helical membrane-spanning segment. Over 808 to 873 (WGPILKMADA…VEDEDENDDI (66 aa)) the chain is Cytoplasmic. The stretch at 812-839 (LKMADAASRQALEELKKKLREFLEASDT) forms a coiled coil. Residues 839 to 873 (TGRQAMAMSSGEEYEMSSLNRGGKRVEDEDENDDI) form a disordered region.

The protein belongs to the TRAFAC class dynamin-like GTPase superfamily. GB1/RHD3 GTPase family. RHD3 subfamily.

The protein localises to the endoplasmic reticulum membrane. In terms of biological role, cooperates with the reticulon proteins and tubule-shaping DP1 family proteins to generate and maintain the structure of the tubular endoplasmic reticulum network. Has GTPase activity, which is required for its function in ER organization. In Talaromyces marneffei (strain ATCC 18224 / CBS 334.59 / QM 7333) (Penicillium marneffei), this protein is Protein sey1 (sey1).